We begin with the raw amino-acid sequence, 87 residues long: Large ribosomal subunit protein bL31B-2/bL31B-3 (87 aa).

It belongs to the bacterial ribosomal protein bL31 family. Type B subfamily. As to quaternary structure, part of the 50S ribosomal subunit.

The chain is Large ribosomal subunit protein bL31B-2/bL31B-3 (rpmE2-2) from Escherichia coli O157:H7.